Reading from the N-terminus, the 314-residue chain is Glycine--tRNA ligase alpha subunit (314 aa).

It belongs to the class-II aminoacyl-tRNA synthetase family. Tetramer of two alpha and two beta subunits.

The protein resides in the cytoplasm. The catalysed reaction is tRNA(Gly) + glycine + ATP = glycyl-tRNA(Gly) + AMP + diphosphate. The polypeptide is Glycine--tRNA ligase alpha subunit (Mesorhizobium japonicum (strain LMG 29417 / CECT 9101 / MAFF 303099) (Mesorhizobium loti (strain MAFF 303099))).